A 457-amino-acid chain; its full sequence is Phosphomethylpyrimidine synthase (457 aa).

Residues Asn-88, Met-117, Tyr-146, His-182, 204–206 (SRG), 245–248 (DACR), and Glu-284 each bind substrate. Position 288 (His-288) interacts with Zn(2+). Tyr-311 is a substrate binding site. His-352 contacts Zn(2+). Cys-428, Cys-431, and Cys-435 together coordinate [4Fe-4S] cluster.

It belongs to the ThiC family. [4Fe-4S] cluster is required as a cofactor.

The enzyme catalyses 5-amino-1-(5-phospho-beta-D-ribosyl)imidazole + S-adenosyl-L-methionine = 4-amino-2-methyl-5-(phosphooxymethyl)pyrimidine + CO + 5'-deoxyadenosine + formate + L-methionine + 3 H(+). It participates in cofactor biosynthesis; thiamine diphosphate biosynthesis. Functionally, catalyzes the synthesis of the hydroxymethylpyrimidine phosphate (HMP-P) moiety of thiamine from aminoimidazole ribotide (AIR) in a radical S-adenosyl-L-methionine (SAM)-dependent reaction. This is Phosphomethylpyrimidine synthase from Clostridium tetani (strain Massachusetts / E88).